We begin with the raw amino-acid sequence, 165 residues long: Glycine cleavage system H protein, mitochondrial (165 aa).

Residues 57-139 form the Lipoyl-binding domain; sequence NAIVGISSYA…YEKGWLFKVD (83 aa). Lys-98 bears the N6-lipoyllysine mark.

It belongs to the GcvH family. As to quaternary structure, the glycine cleavage system is composed of four proteins: P, T, L and H. (R)-lipoate serves as cofactor.

The protein resides in the mitochondrion. Functionally, the glycine cleavage system catalyzes the degradation of glycine. The H protein shuttles the methylamine group of glycine from the P protein to the T protein. This is Glycine cleavage system H protein, mitochondrial (ppl) from Drosophila melanogaster (Fruit fly).